A 440-amino-acid polypeptide reads, in one-letter code: MEYQILKMSLCLFILLFLTPGILCICPLQCICTERHRHVDCSGRNLSTLPSGLQENIIHLNLSYNHFTDLHNQLTQYTNLRTLDISNNRLESLPAHLPRSLWNMSAANNNIKLLDKSDTAYQWNLKYLDVSKNMLEKVVLIKNTLRSLEVLNLSSNKLWTVPTNMPSKLHIVDLSNNSLTQILPGTLINLTNLTHLYLHNNKFTFIPDQSFDQLFQLQEITLYNNRWSCDHKQNITYLLKWMMETKAHVIGTPCSTQISSLKEHNMYPTPSGFTSSLFTVSGMQTVDTINSLSVVTQPKVTKIPKQYRTKETTFGATLSKDTTFTSTDKAFVPYPEDTSTETINSHEAAAATLTIHLQDGMVTNTSLTSSTKSSPTPMTLSITSGMPNNFSEMPQQSTTLNLWREETTTNVKTPLPSVANAWKVNASFLLLLNVVVMLAV.

Positions 1–24 (MEYQILKMSLCLFILLFLTPGILC) are cleaved as a signal peptide. Residues 25 to 55 (ICPLQCICTERHRHVDCSGRNLSTLPSGLQE) form the LRRNT domain. N45 and N61 each carry an N-linked (GlcNAc...) asparagine glycan. LRR repeat units follow at residues 56-77 (NIIHLNLSYNHFTDLHNQLTQY), 79-100 (NLRTLDISNNRLESLPAHLPRS), 101-121 (LWNMSAANNNIKLLDKSDTAY), 124-145 (NLKYLDVSKNMLEKVVLIKNTL), 147-168 (SLEVLNLSSNKLWTVPTNMPSK), 169-189 (LHIVDLSNNSLTQILPGTLIN), 192-213 (NLTHLYLHNNKFTFIPDQSFDQ), and 216-239 (QLQEITLYNNRWSCDHKQNITYLL). N103 carries N-linked (GlcNAc...) asparagine glycosylation. 5 N-linked (GlcNAc...) asparagine glycosylation sites follow: N152, N176, N189, N192, and N234. 5 Ser/Thr-rich repeats span residues 229–270 (CDHK…YPTP), 271–292 (SGFTSSLFTVSGMQTVDTINSL), 293–335 (SVVT…VPYP), 336–377 (EDTS…SPTP), and 378–416 (MTLSITSGMPNNFSEMPQQSTTLNLWREETTTNVKTPLP). 2 N-linked (GlcNAc...) asparagine glycosylation sites follow: N364 and N389. Residue S417 is the site of GPI-anchor amidated serine attachment. Positions 418–440 (VANAWKVNASFLLLLNVVVMLAV) are cleaved as a propeptide — removed in mature form. N-linked (GlcNAc...) asparagine glycosylation occurs at N425.

In terms of assembly, binds to RTN4R. O-glycosylated in its Ser/Thr-rich repeat domain. Oligodendrocytes and myelin of the central nervous system.

Its subcellular location is the cell membrane. In terms of biological role, cell adhesion molecule contributing to the interactive process required for myelination in the central nervous system. This chain is Oligodendrocyte-myelin glycoprotein (OMG), found in Homo sapiens (Human).